The following is a 32-amino-acid chain: Cyclotide glopa B (32 aa).

A cross-link (cyclopeptide (Gly-Asn)) is located at residues Gly1–Asn32. 3 disulfide bridges follow: Cys6–Cys21, Cys10–Cys23, and Cys15–Cys29.

Post-translationally, this is a cyclic peptide.

In terms of biological role, probably participates in a plant defense mechanism. The polypeptide is Cyclotide glopa B (Gloeospermum pauciflorum).